A 506-amino-acid chain; its full sequence is EPTC-inducible aldehyde dehydrogenase (506 aa).

219–225 (GFGVEAG) serves as a coordination point for NAD(+). Active-site residues include glutamate 263 and cysteine 302.

The protein belongs to the aldehyde dehydrogenase family.

The catalysed reaction is an aldehyde + NAD(+) + H2O = a carboxylate + NADH + 2 H(+). Its function is as follows. Degrades all aldehydes potentially generated by N dealkylation of thiocarbamates and may also participate in ethanolamine metabolism and further assimilation of degradation products by thiocarbamate-induced cytochrome P-450. The sequence is that of EPTC-inducible aldehyde dehydrogenase (thcA) from Rhodococcus erythropolis (Arthrobacter picolinophilus).